The sequence spans 141 residues: Large ribosomal subunit protein uL16 (141 aa).

Residues 1-21 (MLMPKRTKFRKQMKGRNRGKS) are compositionally biased toward basic residues. A disordered region spans residues 1 to 22 (MLMPKRTKFRKQMKGRNRGKSF).

It belongs to the universal ribosomal protein uL16 family. As to quaternary structure, part of the 50S ribosomal subunit.

Binds 23S rRNA and is also seen to make contacts with the A and possibly P site tRNAs. The protein is Large ribosomal subunit protein uL16 of Wolinella succinogenes (strain ATCC 29543 / DSM 1740 / CCUG 13145 / JCM 31913 / LMG 7466 / NCTC 11488 / FDC 602W) (Vibrio succinogenes).